A 775-amino-acid chain; its full sequence is MAALDSLSLFTGLGLSEQKARETLKNTVLSAQLREAATQAQQTLGSSIDKATGTLLYGLASRLRDPRRLSFLVSYITSRKIHTETQLSAALEYVRSHPLDPINTEDFEQECGVGVVVTPEQIEEAVEAAINRHRAKLLVERYHFSMGLLMGEARAALKWADGKMIKHEVDMQVLHLLGPKTETDLEKKPKVAKARPEETDQRTAKDVVENGEVVVQTLSLMEQLRGEALKFHKPGENYKTPGYVTTPHTMDLLKQHLDITGGQVRTRFPPEPNGILHIGHAKAINFNFGYAKANNGICFLRFDDTNPEKEEAKFFTAIYDMVAWLGYTPYKVTYASDYFDQLYAWAVELIRRDQAYVCHQRGEELKGHNPLPSPWRDRPIEESLLLFEAMRKGKFAEGEATLRMKLVMEDGKMDPVAYRVKYTPHHRTGDTWCIYPTYDYTHCLCDSIEHITHSLCTKEFQARRSSYFWLCNALDVYCPVQWEYGRLNLHYAVVSKRKILQLVAAGAVRDWDDPRLFTLTALRRRGFPPEAINNFCARVGVTVAQTTMEPHLLEACVRDVLNDTAPRAMAVLEPLQVVITNFPATKALDIQVPNFPADETKGFHQVPFGSTVFIERMDFKEEPEPGYKRLAWGQPVGLRHTGYVIELQHVVKGPSGCVESLKVTCRRADAGEKPKAFIHWVSQPLTCEIRLYERLFQHKNPEDPAEVPGGFLSDLNPASLQVVEAALVDCSVALAKPFDKFQFERLGYFSVDPDSNQGQLVFNRTVTLKEDPGKV.

A2 is subject to N-acetylalanine. The residue at position 70 (S70) is a Phosphoserine. A 'HIGH' region motif is present at residues 270-280; it reads PEPNGILHIGH. ATP is bound by residues 271 to 273 and 277 to 283; these read EPN and HIGHAKA. An L-glutamine-binding site is contributed by D303. K309 carries the N6-acetyllysine modification. Residue Y438 coordinates L-glutamine. Residues T457, 486–487, and 494–496 contribute to the ATP site; these read RL and VSK. The short motif at 493–497 is the 'KMSKS' region element; it reads VVSKR. S495 is subject to Phosphoserine.

This sequence belongs to the class-I aminoacyl-tRNA synthetase family. Monomer. Part of a multisubunit complex that groups tRNA ligases for Arg (RARS1), Asp (DARS1), Gln (QARS1), Ile (IARS1), Leu (LARS1), Lys (KARS1), Met (MARS1) the bifunctional ligase for Glu and Pro (EPRS1) and the auxiliary subunits AIMP1/p43, AIMP2/p38 and EEF1E1/p18. Interacts with RARS1. Part of a complex composed of RARS1, QARS1 and AIMP1.

It localises to the cytoplasm. It is found in the cytosol. It carries out the reaction tRNA(Gln) + L-glutamine + ATP = L-glutaminyl-tRNA(Gln) + AMP + diphosphate. Functionally, glutamine--tRNA ligase. Plays a critical role in brain development. This Bos taurus (Bovine) protein is Glutamine--tRNA ligase (QARS1).